The following is a 449-amino-acid chain: Chromosomal replication initiator protein DnaA (449 aa).

The domain I, interacts with DnaA modulators stretch occupies residues 1–72; it reads MPNLEELWAY…VEGVYEFAQL (72 aa). The domain II stretch occupies residues 72–109; it reads LEVDPVIMTKDELQPAPATDQRPAVEEDDQNLTFKAKT. Residues 110 to 326 form a domain III, AAA+ region region; that stretch reads HLNPKYTFDH…GALVRVQAFS (217 aa). Glycine 154, glycine 156, lysine 157, and threonine 158 together coordinate ATP. A domain IV, binds dsDNA region spans residues 327-449; that stretch reads TMKNEDITTS…ELRNILKNRG (123 aa).

The protein belongs to the DnaA family. As to quaternary structure, oligomerizes as a right-handed, spiral filament on DNA at oriC.

The protein localises to the cytoplasm. Its function is as follows. Plays an essential role in the initiation and regulation of chromosomal replication. ATP-DnaA binds to the origin of replication (oriC) to initiate formation of the DNA replication initiation complex once per cell cycle. Binds the DnaA box (a 9 base pair repeat at the origin) and separates the double-stranded (ds)DNA. Forms a right-handed helical filament on oriC DNA; dsDNA binds to the exterior of the filament while single-stranded (ss)DNA is stabiized in the filament's interior. The ATP-DnaA-oriC complex binds and stabilizes one strand of the AT-rich DNA unwinding element (DUE), permitting loading of DNA polymerase. After initiation quickly degrades to an ADP-DnaA complex that is not apt for DNA replication. Binds acidic phospholipids. The polypeptide is Chromosomal replication initiator protein DnaA (Lacticaseibacillus paracasei (strain ATCC 334 / BCRC 17002 / CCUG 31169 / CIP 107868 / KCTC 3260 / NRRL B-441) (Lactobacillus paracasei)).